Reading from the N-terminus, the 274-residue chain is uncharacterized protein (274 aa).

This is an uncharacterized protein from Acidianus hospitalis (AFV-1).